The following is a 330-amino-acid chain: Protein-lysine N-methyltransferase EEF2KMT (330 aa).

M1 bears the N-acetylmethionine mark. Residues W139, 165–167 (GSG), W228, and A247 each bind S-adenosyl-L-methionine.

The protein belongs to the class I-like SAM-binding methyltransferase superfamily. EEF2KMT family. Interacts with FAM86B2 and FAM86C1P.

The protein localises to the cytoplasm. The enzyme catalyses L-lysyl-[protein] + 3 S-adenosyl-L-methionine = N(6),N(6),N(6)-trimethyl-L-lysyl-[protein] + 3 S-adenosyl-L-homocysteine + 3 H(+). Catalyzes the trimethylation of eukaryotic elongation factor 2 (EEF2) on 'Lys-525'. This Homo sapiens (Human) protein is Protein-lysine N-methyltransferase EEF2KMT.